A 182-amino-acid chain; its full sequence is Meiotically up-regulated gene 82 protein (182 aa).

Residues 161–182 (EKRLSEKKYKQKKKTQRRITMD) are disordered. Basic residues predominate over residues 169–182 (YKQKKKTQRRITMD).

This sequence belongs to the prokaryotic/mitochondrial release factor family.

Its subcellular location is the mitochondrion. In terms of biological role, has a role in meiosis. This Schizosaccharomyces pombe (strain 972 / ATCC 24843) (Fission yeast) protein is Meiotically up-regulated gene 82 protein (mug82).